A 247-amino-acid polypeptide reads, in one-letter code: O-methyltransferase imqG (247 aa).

Residues Glu84, 86 to 87 (GT), and Ala138 contribute to the S-adenosyl-L-methionine site. Asp163, Asp189, and Asn190 together coordinate a divalent metal cation. Asp163 contacts substrate.

This sequence belongs to the class I-like SAM-binding methyltransferase superfamily. Cation-dependent O-methyltransferase family. CCoAMT subfamily. As to quaternary structure, homodimer. It depends on a divalent metal cation as a cofactor.

Its pathway is secondary metabolite biosynthesis. O-methyltransferase; part of the gene cluster that mediates the biosynthesis of imizoquins A to D, tripeptide-derived alkaloids that serve a protective role against oxidative stress that are essential for normal germination. ImqB is a canonical three-module NRPS that assembles the tripeptide backbone of the imizoquins via condensation of Trp, Tyr, and Leu-derived precursors. N-methylation by imqF and phenol oxidation by imqC, followed by cyclization via the FAD-dependent oxidase imqH carry out the three-step transformation of L-tyrosine into tetrahydroisoquinoline. Importantly, this sequence requires the presence of a free amine in the tyrosine moiety, indicating that isoquinoline formation occurs prior to peptide bond formation. The imidazolidin-4-one ring of imizoquins could form following additional oxidation of the methyl-derived bridgehead carbon by imqH. Lastly, O-methylation by imqG and leucine hydroxylation by imqE complete biosynthesis of the imizoquins. This is O-methyltransferase imqG from Aspergillus flavus (strain ATCC 200026 / FGSC A1120 / IAM 13836 / NRRL 3357 / JCM 12722 / SRRC 167).